We begin with the raw amino-acid sequence, 381 residues long: Testis-specific expressed protein 55 (381 aa).

2 disordered regions span residues 1–176 (MDEP…SDPH) and 292–317 (TTEY…QSSR). Composition is skewed to basic and acidic residues over residues 8 to 24 (SLNH…EKNN) and 65 to 103 (RTSE…ERRT). Positions 104–113 (SQPPNQQLPS) are enriched in polar residues. A compositionally biased stretch (basic and acidic residues) spans 114–125 (HSERKTSGKIDG). The span at 134 to 143 (TDQETSEFDD) shows a compositional bias: acidic residues. 2 stretches are compositionally biased toward polar residues: residues 147 to 163 (SAST…QEYN) and 292 to 302 (TTEYTSDTTPV). A compositionally biased stretch (low complexity) spans 307 to 317 (RSSQRSSQSSR).

In terms of tissue distribution, testis-specific.

The protein resides in the nucleus. This Mus musculus (Mouse) protein is Testis-specific expressed protein 55.